The sequence spans 379 residues: MSEGNIEPHGGRLISRLYSGDASGMEKAAISQELASDVENIADGIFSPLEGFLGRNDFEAVLEKGRLADGTAWTIPIVFDADAAEAARIKAAGDVLLEDPSGSKVAVLHAEEEYPFDKKAAAARVYGTDDAAHPGVSRMLSMKERLVGGRIDLVDRPEKTEIRRLRMSPVETRHAFAESGWKTTVAFQTRNPPHVAHEMLQKTSITTRDGVFVNPIVGRKKPGDFADEVIVKCYEEMIKHYYPENRCRLGTLHTEMRYAGPREAIHHGIMRQNYGCTHIIIGRDHAGVGKYYDPFAAHRIFDDYPDLGITPIFFPAFFYCRKCLTYTNPKACPHGEGEREQISGTALRDLIRAGKAPSEYILRPEVARIILEHPRPFID.

Belongs to the sulfate adenylyltransferase family.

The catalysed reaction is sulfate + ATP + H(+) = adenosine 5'-phosphosulfate + diphosphate. It functions in the pathway sulfur metabolism; hydrogen sulfide biosynthesis; sulfite from sulfate: step 1/3. In Cenarchaeum symbiosum (strain A), this protein is Sulfate adenylyltransferase.